Consider the following 407-residue polypeptide: Tyrosine--tRNA ligase (407 aa).

Tyr35 is an L-tyrosine binding site. The 'HIGH' region motif lies at 40–49; it reads PTADSLHVGH. Tyr168 and Gln172 together coordinate L-tyrosine. A 'KMSKS' region motif is present at residues 228–232; the sequence is KMGKT. Residue Lys231 participates in ATP binding. The 65-residue stretch at 341–405 folds into the S4 RNA-binding domain; it reads NLLVDLLVKC…RGKKNFNRIV (65 aa).

It belongs to the class-I aminoacyl-tRNA synthetase family. TyrS type 1 subfamily. Homodimer.

The protein resides in the cytoplasm. The enzyme catalyses tRNA(Tyr) + L-tyrosine + ATP = L-tyrosyl-tRNA(Tyr) + AMP + diphosphate + H(+). Functionally, catalyzes the attachment of tyrosine to tRNA(Tyr) in a two-step reaction: tyrosine is first activated by ATP to form Tyr-AMP and then transferred to the acceptor end of tRNA(Tyr). The protein is Tyrosine--tRNA ligase of Clostridium botulinum (strain ATCC 19397 / Type A).